The primary structure comprises 159 residues: Olfactory receptor-like protein COR8 (159 aa).

The Cytoplasmic portion of the chain corresponds to 1-16 (VAICNPLLYTISMPKS). A helical membrane pass occupies residues 17–41 (LCMKLVAGSYLGGVLNSLTQTCCLL). The Extracellular segment spans residues 42-82 (PLPFCGPNVINHYFCDTNPLLKLTCSDGRLNELLLVTFNGT). The N-linked (GlcNAc...) asparagine glycan is linked to Asn-80. Residues 83–103 (ISMTVLLIIVISYVYILVSIL) form a helical membrane-spanning segment. The Cytoplasmic portion of the chain corresponds to 104-116 (SIRSARGRHKAFS). The helical transmembrane segment at 117–137 (TCASHLLTVTLFYVPAGLSHM) threads the bilayer. Residues 138 to 148 (QPGSKYSLDME) lie on the Extracellular side of the membrane. Residues 149–159 (KVTAVFYTLLV) form a helical membrane-spanning segment.

It belongs to the G-protein coupled receptor 1 family.

Its subcellular location is the cell membrane. Functionally, odorant receptor. This chain is Olfactory receptor-like protein COR8 (COR8), found in Gallus gallus (Chicken).